Reading from the N-terminus, the 54-residue chain is uncharacterized protein (54 aa).

The disordered stretch occupies residues 34-54 (NNREKQKSGKLRELRRGFKTF).

This is an uncharacterized protein from Acidianus two-tailed virus (ATV).